The primary structure comprises 394 residues: Class II hydrophobin TH1 (394 aa).

The N-terminal stretch at methionine 1 to alanine 16 is a signal peptide. Positions valine 17–glycine 42 are disordered. Residues glycine 33–glycine 42 are compositionally biased toward gly residues. Positions glycine 48 to isoleucine 117 are hydrophobin 1. Intrachain disulfides connect cysteine 52-cysteine 101, cysteine 62-cysteine 92, cysteine 63-cysteine 75, and cysteine 102-cysteine 113. Positions glycine 135–asparagine 157 are disordered. A compositionally biased stretch (gly residues) spans glycine 148–asparagine 157. Hydrophobin stretches follow at residues glycine 200 to isoleucine 270 and glycine 326 to alanine 394.

It belongs to the cerato-ulmin hydrophobin family. In terms of assembly, homotetramer. Further self-assembles to form highly ordered films at water-air interfaces through intermolecular interactions. Post-translationally, several N-termini starting at positions 17, 20, 22, 28 and 48 have been identified by direct sequencing. In terms of processing, contains a number of intrachain disulfide bonds. Not glycosylated.

It is found in the secreted. Its subcellular location is the cell wall. Functionally, aerial growth, conidiation, and dispersal of filamentous fungi in the environment rely upon a capability of their secreting small amphipathic proteins called hydrophobins (HPBs) with low sequence identity. Class I can self-assemble into an outermost layer of rodlet bundles on aerial cell surfaces, conferring cellular hydrophobicity that supports fungal growth, development and dispersal; whereas Class II form highly ordered films at water-air interfaces through intermolecular interactions but contribute nothing to the rodlet structure. TH1 is a class II hydrophobin that reduces water surface tension dramatically upon assembly at the water-air interface and plays a role in the formation of aerial hyphae. The polypeptide is Class II hydrophobin TH1 (TH1) (Claviceps fusiformis (Ergot fungus)).